We begin with the raw amino-acid sequence, 281 residues long: 3-hydroxyanthranilate 3,4-dioxygenase (281 aa).

The interval 1–162 (MAGVTAIEIP…SNEFKTGKPG (162 aa)) is domain A (catalytic). Arg-45 provides a ligand contact to O2. Residues His-49, Glu-55, and His-93 each contribute to the Fe cation site. Residue Glu-55 participates in substrate binding. Substrate contacts are provided by Arg-97 and Glu-107. The linker stretch occupies residues 163–179 (KGTFACNAPYEARWTDL). The interval 180–281 (PVPINRKEFI…GFAITIRMPG (102 aa)) is domain B.

Belongs to the 3-HAO family. The cofactor is Fe(2+).

The protein resides in the cytoplasm. It catalyses the reaction 3-hydroxyanthranilate + O2 = (2Z,4Z)-2-amino-3-carboxymuconate 6-semialdehyde. Its pathway is cofactor biosynthesis; NAD(+) biosynthesis; quinolinate from L-kynurenine: step 3/3. Functionally, catalyzes the oxidative ring opening of 3-hydroxyanthranilate to 2-amino-3-carboxymuconate semialdehyde, which spontaneously cyclizes to quinolinate. In Caenorhabditis briggsae, this protein is 3-hydroxyanthranilate 3,4-dioxygenase (haao-1).